Reading from the N-terminus, the 159-residue chain is NAD(P)H-quinone oxidoreductase subunit J, chloroplastic (159 aa).

Belongs to the complex I 30 kDa subunit family. In terms of assembly, NDH is composed of at least 16 different subunits, 5 of which are encoded in the nucleus. In terms of tissue distribution, leaves.

It is found in the plastid. It localises to the chloroplast thylakoid membrane. It carries out the reaction a plastoquinone + NADH + (n+1) H(+)(in) = a plastoquinol + NAD(+) + n H(+)(out). The enzyme catalyses a plastoquinone + NADPH + (n+1) H(+)(in) = a plastoquinol + NADP(+) + n H(+)(out). NDH shuttles electrons from NAD(P)H:plastoquinone, via FMN and iron-sulfur (Fe-S) centers, to quinones in the photosynthetic chain and possibly in a chloroplast respiratory chain. The immediate electron acceptor for the enzyme in this species is believed to be plastoquinone. Couples the redox reaction to proton translocation, and thus conserves the redox energy in a proton gradient. This Zea mays (Maize) protein is NAD(P)H-quinone oxidoreductase subunit J, chloroplastic.